The sequence spans 242 residues: Adenosylcobinamide-GDP ribazoletransferase (242 aa).

A run of 5 helical transmembrane segments spans residues 31–51 (LLFY…LSTA), 52–72 (LMGA…VLLS), 109–129 (IAVV…VALI), 134–154 (GAAL…LFLT), and 188–208 (ILIG…CFIG).

The protein belongs to the CobS family. It depends on Mg(2+) as a cofactor.

It localises to the cell inner membrane. It catalyses the reaction alpha-ribazole + adenosylcob(III)inamide-GDP = adenosylcob(III)alamin + GMP + H(+). The enzyme catalyses alpha-ribazole 5'-phosphate + adenosylcob(III)inamide-GDP = adenosylcob(III)alamin 5'-phosphate + GMP + H(+). Its pathway is cofactor biosynthesis; adenosylcobalamin biosynthesis; adenosylcobalamin from cob(II)yrinate a,c-diamide: step 7/7. Joins adenosylcobinamide-GDP and alpha-ribazole to generate adenosylcobalamin (Ado-cobalamin). Also synthesizes adenosylcobalamin 5'-phosphate from adenosylcobinamide-GDP and alpha-ribazole 5'-phosphate. In Pseudomonas fluorescens (strain SBW25), this protein is Adenosylcobinamide-GDP ribazoletransferase.